A 252-amino-acid chain; its full sequence is Phosphate import ATP-binding protein PstB (252 aa).

An ABC transporter domain is found at 5–247; that stretch reads MRGQDVKVFY…PKEQRTQDYI (243 aa). ATP is bound at residue 37 to 44; sequence GPSGCGKS.

Belongs to the ABC transporter superfamily. Phosphate importer (TC 3.A.1.7) family. In terms of assembly, the complex is composed of two ATP-binding proteins (PstB), two transmembrane proteins (PstC and PstA) and a solute-binding protein (PstS).

It localises to the cell inner membrane. It catalyses the reaction phosphate(out) + ATP + H2O = ADP + 2 phosphate(in) + H(+). In terms of biological role, part of the ABC transporter complex PstSACB involved in phosphate import. Responsible for energy coupling to the transport system. The sequence is that of Phosphate import ATP-binding protein PstB from Bartonella quintana (strain Toulouse) (Rochalimaea quintana).